The chain runs to 179 residues: uncharacterized protein (179 aa).

Residues 1–14 (MTKKVKLDQDEINN) show a composition bias toward basic and acidic residues. 2 disordered regions span residues 1–90 (MTKK…NNFC) and 121–147 (HKKS…DKKV). 2 stretches are compositionally biased toward low complexity: residues 15–90 (KNKN…NNFC) and 126–137 (RSQSQSSLNSFD). The span at 138–147 (QDNKSKDKKV) shows a compositional bias: basic and acidic residues.

This is an uncharacterized protein from Dictyostelium discoideum (Social amoeba).